The chain runs to 252 residues: 2-succinyl-6-hydroxy-2,4-cyclohexadiene-1-carboxylate synthase (252 aa).

Belongs to the AB hydrolase superfamily. MenH family. As to quaternary structure, monomer.

The enzyme catalyses 5-enolpyruvoyl-6-hydroxy-2-succinyl-cyclohex-3-ene-1-carboxylate = (1R,6R)-6-hydroxy-2-succinyl-cyclohexa-2,4-diene-1-carboxylate + pyruvate. It participates in quinol/quinone metabolism; 1,4-dihydroxy-2-naphthoate biosynthesis; 1,4-dihydroxy-2-naphthoate from chorismate: step 3/7. It functions in the pathway quinol/quinone metabolism; menaquinone biosynthesis. Catalyzes a proton abstraction reaction that results in 2,5-elimination of pyruvate from 2-succinyl-5-enolpyruvyl-6-hydroxy-3-cyclohexene-1-carboxylate (SEPHCHC) and the formation of 2-succinyl-6-hydroxy-2,4-cyclohexadiene-1-carboxylate (SHCHC). The protein is 2-succinyl-6-hydroxy-2,4-cyclohexadiene-1-carboxylate synthase of Salmonella typhi.